The sequence spans 498 residues: Putative antiporter subunit mnhD2 (498 aa).

Helical transmembrane passes span 2–22, 32–52, 78–98, 108–128, 130–150, 161–181, 209–229, 240–260, 271–291, 308–328, 330–350, 369–389, 406–426, and 451–471; these read LSNL…ILVF, YLYL…LIYV, LSLI…AYGF, YHLP…FLTS, LFNL…LITL, IIYV…IGLL, ISLI…FMWL, LAAL…IRFF, IHPL…IGVI, IGFI…GAIF, LVND…LVYI, FGVA…FSGF, IGLA…FRIF, and ILSI…VVLN.

This sequence belongs to the CPA3 antiporters (TC 2.A.63) subunit D family. As to quaternary structure, may form a heterooligomeric complex that consists of seven subunits: mnhA2, mnhB2, mnhC2, mnhD2, mnhE2, mnhF2 and mnhG2.

Its subcellular location is the cell membrane. The polypeptide is Putative antiporter subunit mnhD2 (mnhD2) (Staphylococcus aureus (strain Mu3 / ATCC 700698)).